The primary structure comprises 217 residues: Probable glutathione S-transferase (217 aa).

The GST N-terminal domain occupies 2–81 (AEVKLLGLRY…YIDEAFEGPS (80 aa)). Glutathione contacts are provided by residues S12, K39, I53, and 65–66 (ES). The 125-residue stretch at 86–210 (DPYDRALARF…ELLIRYRAYI (125 aa)) folds into the GST C-terminal domain.

This sequence belongs to the GST superfamily. HSP26 family.

The enzyme catalyses RX + glutathione = an S-substituted glutathione + a halide anion + H(+). The polypeptide is Probable glutathione S-transferase (PRP1) (Solanum tuberosum (Potato)).